We begin with the raw amino-acid sequence, 125 residues long: Small ribosomal subunit protein uS12m (125 aa).

Disordered regions lie at residues 1 to 23 (MPTL…RTRA) and 104 to 125 (LMGI…PKSI). Over residues 10–23 (HGREEKRRTDRTRA) the composition is skewed to basic and acidic residues.

The protein belongs to the universal ribosomal protein uS12 family.

It localises to the mitochondrion. Its function is as follows. Protein S12 is involved in the translation initiation step. This chain is Small ribosomal subunit protein uS12m (RPS12), found in Raphanus sativus (Radish).